The following is a 209-amino-acid chain: Kynurenine formamidase (209 aa).

Trp-18 lines the substrate pocket. Residues His-48, His-52, and Asp-54 each contribute to the Zn(2+) site. The active-site Proton donor/acceptor is His-58. Zn(2+)-binding residues include His-160 and Glu-172.

It belongs to the Cyclase 1 superfamily. KynB family. In terms of assembly, homodimer. Zn(2+) is required as a cofactor.

It catalyses the reaction N-formyl-L-kynurenine + H2O = L-kynurenine + formate + H(+). It participates in amino-acid degradation; L-tryptophan degradation via kynurenine pathway; L-kynurenine from L-tryptophan: step 2/2. Its function is as follows. Catalyzes the hydrolysis of N-formyl-L-kynurenine to L-kynurenine, the second step in the kynurenine pathway of tryptophan degradation. The chain is Kynurenine formamidase from Paraburkholderia phymatum (strain DSM 17167 / CIP 108236 / LMG 21445 / STM815) (Burkholderia phymatum).